We begin with the raw amino-acid sequence, 173 residues long: Zinc finger A20 and AN1 domain-containing stress-associated protein 2 (173 aa).

The segment at 12–46 (PEGPKLCTNNCGFFGSAATMNMCSKCHKDMLFQQE) adopts an A20-type zinc-finger fold. Positions 18, 22, 34, 37, 114, 117, 128, 130, 135, 138, 144, and 146 each coordinate Zn(2+). An AN1-type zinc finger spans residues 108–154 (PKGPSRCTTCNKRVGLTGFKCRCGSLFCGTHRYADVHDCSFNYHAAA).

May be involved in environmental stress response. This Arabidopsis thaliana (Mouse-ear cress) protein is Zinc finger A20 and AN1 domain-containing stress-associated protein 2 (SAP2).